The primary structure comprises 225 residues: MTTGADAATERQDKPGGKLFIRPWIFIRGVPAMKFLPPEGPPEVAFAGRSNVGKSSLINGLVGRKGLARTSNTPGRTQELNYFVPEGYSGEAGDLPPMALVDMPGYGFAKAPKAQVDAWTKLVFDYLRGRVTLKRVYLLIDARHGIKKIDEEVMDLLDSAAVSYQIVLTKADKIKSPAVTKLVAETGQKIVKRPAAFPEVIATSSEKGEGLEELRAAIVHAVTAG.

The 185-residue stretch at 40–224 (GPPEVAFAGR…RAAIVHAVTA (185 aa)) folds into the EngB-type G domain. GTP contacts are provided by residues 48-55 (GRSNVGKS), 75-79 (GRTQE), 102-105 (DMPG), 169-172 (TKAD), and 203-205 (TSS). Mg(2+) contacts are provided by S55 and T77.

It belongs to the TRAFAC class TrmE-Era-EngA-EngB-Septin-like GTPase superfamily. EngB GTPase family. Mg(2+) serves as cofactor.

Functionally, necessary for normal cell division and for the maintenance of normal septation. The sequence is that of Probable GTP-binding protein EngB from Chelativorans sp. (strain BNC1).